Consider the following 225-residue polypeptide: UPF0758 protein Ssed_0385 (225 aa).

The 123-residue stretch at 102–224 (ILSDPDLTRD…IVSFAERGWI (123 aa)) folds into the MPN domain. Residues H173, H175, and D186 each contribute to the Zn(2+) site. The short motif at 173–186 (HNHPSGVAEPSLAD) is the JAMM motif element.

The protein belongs to the UPF0758 family.

The sequence is that of UPF0758 protein Ssed_0385 from Shewanella sediminis (strain HAW-EB3).